The chain runs to 574 residues: Phosphatidylinositol 4-kinase gamma 3 (574 aa).

Ubiquitin-like domains follow at residues Pro32–Gln109 and Ala110–Arg188. The PI3K/PI4K catalytic domain maps to Gly257–Glu555. Residues Ser263–Gly269 form a G-loop region. Residues Ser264–Ala270, Lys286, and Gln381–Val384 contribute to the ATP site. The tract at residues Ala414 to Asn422 is catalytic loop. An activation loop region spans residues Pro438 to Glu464. Residue Asp440 participates in ATP binding.

The protein belongs to the PI3/PI4-kinase family. Type II PI4K subfamily.

It carries out the reaction a 1,2-diacyl-sn-glycero-3-phospho-(1D-myo-inositol) + ATP = a 1,2-diacyl-sn-glycero-3-phospho-(1D-myo-inositol 4-phosphate) + ADP + H(+). In terms of biological role, the phosphorylation of phosphatidylinositol (PI) to PI4P is the first committed step in the generation of phosphatidylinositol 4,5-bisphosphate (PIP2), a precursor of the second messenger inositol 1,4,5-trisphosphate (InsP3). This chain is Phosphatidylinositol 4-kinase gamma 3 (PI4KG3), found in Arabidopsis thaliana (Mouse-ear cress).